Reading from the N-terminus, the 306-residue chain is Protein YIPF1 (306 aa).

Residues 1-119 lie on the Cytoplasmic side of the membrane; that stretch reads MAAVDDLQFE…VRLYIRSNPD (119 aa). Residues 33-59 are disordered; sequence PSVSFKHQPRPPGSLGREEDEELLGTN. Over residues 50–59 the composition is skewed to acidic residues; that stretch reads EEDEELLGTN. A helical transmembrane segment spans residues 120–140; it reads LYGPFWICATLVFAIAISGNL. Residues 141–162 are Lumenal-facing; it reads SNFLIHLGEKTYHYVPEFQKVS. A helical transmembrane segment spans residues 163–183; the sequence is IAATVIYAYAWLVPLALWGFL. Residues 184 to 200 lie on the Cytoplasmic side of the membrane; the sequence is LWRNSKVMNIVSYSFLE. The chain crosses the membrane as a helical span at residues 201–221; it reads IVCVYGYSLFIYIPTAVLWII. The Lumenal segment spans residues 222–227; it reads PQRVIR. A helical membrane pass occupies residues 228 to 248; that stretch reads WVLVTIALGISGSVLAMTFWP. The Cytoplasmic segment spans residues 249–256; it reads AVREDNRR. The helical transmembrane segment at 257-277 threads the bilayer; sequence VALATIVTIMLLHVLLSVGCL. The Lumenal portion of the chain corresponds to 278 to 306; sequence AYFFDAPEMDHLPAAITTPNQTVAAAKSS. N-linked (GlcNAc...) asparagine glycosylation occurs at N297.

It belongs to the YIP1 family. In terms of assembly, interacts with YIPF6; this interaction may stabilize YIPF1. May also form a ternary complex with YIPF2 and YIPF6.

The protein resides in the golgi apparatus. Its subcellular location is the cis-Golgi network membrane. It is found in the trans-Golgi network membrane. It localises to the late endosome membrane. The polypeptide is Protein YIPF1 (Yipf1) (Rattus norvegicus (Rat)).